The chain runs to 241 residues: Tetraspanin-1 (241 aa).

The Cytoplasmic segment spans residues 1 to 11 (MQCFSFIKTMM). Residues 12-34 (ILFNLLIFLCGAALLAVGIWVSI) form a helical membrane-spanning segment. Topologically, residues 35–53 (DGASFLKIFGPLSSSAMQF) are extracellular. The helical transmembrane segment at 54–76 (VNVGYFLIAAGVVVFALGFLGCY) threads the bilayer. Residues 77-88 (GAKTESKCALMT) are Cytoplasmic-facing. Residues 89 to 111 (FFFILLLIFIAEVAAAVVALVYT) form a helical membrane-spanning segment. At 112–214 (TMAEHFLTLL…LYDIRTNAVT (103 aa)) the chain is on the extracellular side. Asparagine 141, asparagine 154, asparagine 178, and asparagine 184 each carry an N-linked (GlcNAc...) asparagine glycan. The helical transmembrane segment at 215–237 (VGGVAAGIGGLELAAMIVSMYLY) threads the bilayer. Topologically, residues 238–241 (CNLQ) are cytoplasmic.

It belongs to the tetraspanin (TM4SF) family. Interacts with SLC19A2. Interacts with NTRK1/TRKA.

It is found in the lysosome membrane. In terms of biological role, structural component of specialized membrane microdomains known as tetraspanin-enriched microdomains (TERMs), which act as platforms for receptor clustering and signaling. Participates thereby in diverse biological functions such as cell signal transduction, adhesion, migration and protein trafficking. Regulates neuronal differentiation in response to NGF by facilitating NGF-mediated activation of NTRK1/TRKA receptor tyrosine kinase and subsequent downstream signaling pathways. Plays a role in the inhibition of TNFalpha-induced apoptosis. Mechanistically, inhibits the NF-kappa-B signaling pathway by blocking phosphorylation of CHUK. Also promotes the stability of the thiamine transporter 1/SLC19A2 in intestinal epithelial cells leading to an increase of thiamine uptake process. The sequence is that of Tetraspanin-1 (TSPAN1) from Pongo abelii (Sumatran orangutan).